Consider the following 174-residue polypeptide: MTQTIFMVGARGAGKTTVGSALALALGYQFIDTDLFMQQTTQMSVAEMVEQEGWLGFRRRESIALQTVTQPSTVVATGGGAILAEENRRFMRQHGKVIYLRSPAEVLAQRLEEYPQDTQRPTLTGRPIAEEMLEVLAAREALYQEAAHYVMDGTGGPQQVVEQILSALQLETVK.

12 to 17 contributes to the ATP binding site; sequence GAGKTT. Positions 16 and 32 each coordinate Mg(2+). 3 residues coordinate substrate: Asp34, Arg58, and Gly79. The LID domain stretch occupies residues 112–126; that stretch reads EEYPQDTQRPTLTGR. Arg120 provides a ligand contact to ATP. Arg139 provides a ligand contact to substrate.

It belongs to the shikimate kinase family. AroL subfamily. Monomer. Requires Mg(2+) as cofactor.

The protein resides in the cytoplasm. It catalyses the reaction shikimate + ATP = 3-phosphoshikimate + ADP + H(+). It participates in metabolic intermediate biosynthesis; chorismate biosynthesis; chorismate from D-erythrose 4-phosphate and phosphoenolpyruvate: step 5/7. Catalyzes the specific phosphorylation of the 3-hydroxyl group of shikimic acid using ATP as a cosubstrate. In Serratia proteamaculans (strain 568), this protein is Shikimate kinase 2.